The following is a 955-amino-acid chain: 26S proteasome non-ATPase regulatory subunit 1 (955 aa).

Residues 279–313 form a disordered region; the sequence is PGSTNTGTVPGSEKDSDAMEAEEKPGSTCVGKSAE. Residues 290–303 show a composition bias toward basic and acidic residues; it reads SEKDSDAMEAEEKP. 10 PC repeats span residues 403–436, 441–474, 476–510, 511–545, 547–580, 581–616, 617–649, 651–685, 686–726, and 729–761; these read TATA…PGSA, GGLY…DIVR, GGSL…VTGE, AAGL…EKIL, GLAV…ILRR, SGMY…DVRR, AAVE…PHVR, GAAM…YVRQ, GALI…DVMA, and GAIL…PSVV. Disordered stretches follow at residues 839–879 and 932–955; these read AKKK…NFQL and AHGP…YIDD. 2 stretches are compositionally biased toward basic and acidic residues: residues 842 to 854 and 861 to 874; these read KEKE…KEEE and TEKK…KEPE. A compositionally biased stretch (acidic residues) spans 938–955; that stretch reads EEEEQEPEPPEPFEYIDD.

It belongs to the proteasome subunit S1 family. In terms of assembly, component of the 19S proteasome regulatory particle complex. The 26S proteasome consists of a 20S core particle (CP) and two 19S regulatory subunits (RP). The regulatory particle is made of a lid composed of 9 subunits, a base containing 6 ATPases and few additional components including PSMD1. Interacts with ADRM1.

Component of the 26S proteasome, a multiprotein complex involved in the ATP-dependent degradation of ubiquitinated proteins. This complex plays a key role in the maintenance of protein homeostasis by removing misfolded or damaged proteins, which could impair cellular functions, and by removing proteins whose functions are no longer required. Therefore, the proteasome participates in numerous cellular processes, including cell cycle progression, apoptosis, or DNA damage repair. This is 26S proteasome non-ATPase regulatory subunit 1 (PSMD1) from Gallus gallus (Chicken).